We begin with the raw amino-acid sequence, 449 residues long: Packaging protein 1 (449 aa).

The segment at 1–77 is disordered; that stretch reads METRGRRPAA…QPAKRGDMLD (77 aa). Residue 171-178 coordinates ATP; the sequence is GPTGCGKS. Residues 440 to 449 are DNA-binding; it reads RAYRARKTPK.

The protein belongs to the adenoviridae packaging protein 1 family. In terms of assembly, homodimer. Part of a genome packaging complex composed of packaging proteins 1, 2 and 3; this complex specifically binds to the packaging sequence on the left end of viral genomic DNA and performs packaging of the viral genome. Interacts with protein 33K.

It is found in the virion. The protein localises to the host nucleus. The protein resides in the host nucleoplasm. Its subcellular location is the host nucleolus. In terms of biological role, component of the packaging machinery which encapsidates the viral DNA into preformed capsids and transcriptional activator of the viral major late promoter (MLP). Binds, along with packaging proteins 2 and 3, to the specific packaging sequence on the left end of viral genomic DNA and displays ATPase activity thereby providing the power stroke of the packaging machinery. The activity of packaging protein IVa2 is stimulated by protein 33K which acts as a terminase. May be the protein that pumps DNA into the capsid powered by ATP hydrolysis. Specifically binds to the 5'-CG-3' nucleotides of the repeats making up the packaging sequence. Component of the DEF-A and DEF-B transcription factors that bind downstream elements of the major late promoter (MLP), and stimulate transcription from the MLP after initiation of viral DNA replication. DEF-A is a heterodimer packaging proteins 1 and 2 and DEF-B is a homodimer of packaging protein 1. The sequence is that of Packaging protein 1 from Homo sapiens (Human).